A 55-amino-acid chain; its full sequence is Glycine-rich antimicrobial peptide Pg-AMP (55 aa).

Over residues 18 to 39 (GYGGYGGGRYGGGYGSGRGQPV) the composition is skewed to gly residues. A disordered region spans residues 18–55 (GYGGYGGGRYGGGYGSGRGQPVGQGVERSHDDNRNQPR). A compositionally biased stretch (basic and acidic residues) spans 44–55 (ERSHDDNRNQPR).

Monomer and homodimer. Might act by homodimer formation.

Its function is as follows. Has antibacterial activity against the Gram-negative bacteria Klebsiella sp., Proteus sp., E.coli ATCC 8739 (MIC=72 ug/ml) and K.pneumoniae (MIC=32 ug/ml). Has no activity against the Gram-negative bacterium S.typhimurium or the Gram-positive bacterium S.aureus. Does not have antifungal activity against the human and plant pathogenic fungi F.oxysporum, A.fumigatus and R.solani. This is Glycine-rich antimicrobial peptide Pg-AMP from Psidium guajava (Guava).